A 760-amino-acid polypeptide reads, in one-letter code: 5-methyltetrahydropteroyltriglutamate--homocysteine methyltransferase (760 aa).

Residues 17 to 20 (RELK) and Lys113 contribute to the 5-methyltetrahydropteroyltri-L-glutamate site. Residues 433–435 (IGS) and Glu486 each bind L-homocysteine. L-methionine-binding positions include 433 to 435 (IGS) and Glu486. Residues 517–518 (RC) and Trp563 each bind 5-methyltetrahydropteroyltri-L-glutamate. Position 601 (Asp601) interacts with L-homocysteine. Asp601 lines the L-methionine pocket. Glu607 contacts 5-methyltetrahydropteroyltri-L-glutamate. Zn(2+)-binding residues include His643, Cys645, and Glu667. Catalysis depends on His696, which acts as the Proton donor. Cys728 is a Zn(2+) binding site.

This sequence belongs to the vitamin-B12 independent methionine synthase family. Zn(2+) is required as a cofactor.

The enzyme catalyses 5-methyltetrahydropteroyltri-L-glutamate + L-homocysteine = tetrahydropteroyltri-L-glutamate + L-methionine. It functions in the pathway amino-acid biosynthesis; L-methionine biosynthesis via de novo pathway; L-methionine from L-homocysteine (MetE route): step 1/1. Catalyzes the transfer of a methyl group from 5-methyltetrahydrofolate to homocysteine resulting in methionine formation. This chain is 5-methyltetrahydropteroyltriglutamate--homocysteine methyltransferase, found in Chromobacterium violaceum (strain ATCC 12472 / DSM 30191 / JCM 1249 / CCUG 213 / NBRC 12614 / NCIMB 9131 / NCTC 9757 / MK).